Consider the following 399-residue polypeptide: Methylthioribose kinase (399 aa).

Residues N40, K57, and 111–113 (EDL) each bind ATP. Position 229 (D229) interacts with substrate. 246 to 248 (DAE) contributes to the ATP binding site. R344 lines the substrate pocket.

Belongs to the methylthioribose kinase family. In terms of assembly, homodimer.

The catalysed reaction is 5-(methylsulfanyl)-D-ribose + ATP = 5-(methylsulfanyl)-alpha-D-ribose 1-phosphate + ADP + H(+). Its pathway is amino-acid biosynthesis; L-methionine biosynthesis via salvage pathway; S-methyl-5-thio-alpha-D-ribose 1-phosphate from S-methyl-5'-thioadenosine (hydrolase route): step 2/2. In terms of biological role, catalyzes the phosphorylation of methylthioribose into methylthioribose-1-phosphate. The protein is Methylthioribose kinase of Citrobacter koseri (strain ATCC BAA-895 / CDC 4225-83 / SGSC4696).